Consider the following 796-residue polypeptide: Protein translocase subunit SecA 2 (796 aa).

ATP-binding positions include Gln-84, 102–106 (GEGKT), and Asp-496.

Belongs to the SecA family. Monomer and homodimer. Part of the essential Sec protein translocation apparatus which comprises SecA, SecYEG and auxiliary proteins SecDF. Other proteins may also be involved.

The protein localises to the cell membrane. The protein resides in the cytoplasm. It carries out the reaction ATP + H2O + cellular proteinSide 1 = ADP + phosphate + cellular proteinSide 2.. Its function is as follows. Part of the Sec protein translocase complex. Interacts with the SecYEG preprotein conducting channel. Has a central role in coupling the hydrolysis of ATP to the transfer of proteins into and across the cell membrane, serving as an ATP-driven molecular motor driving the stepwise translocation of polypeptide chains across the membrane. This is Protein translocase subunit SecA 2 from Staphylococcus aureus (strain Mu3 / ATCC 700698).